The primary structure comprises 455 residues: Chromosomal replication initiator protein DnaA (455 aa).

Positions 1–75 are domain I, interacts with DnaA modulators; the sequence is MDTNNNIEKE…EILSQNKVGM (75 aa). Residues 75–106 are domain II; that stretch reads MHLAHSVDVRIEVAPKIQISTQSNINYKATKM. The interval 107–321 is domain III, AAA+ region; sequence SVKDSYTFEN…GAIIKISVNA (215 aa). Positions 151, 153, 154, and 155 each coordinate ATP. Positions 322 to 455 are domain IV, binds dsDNA; sequence NLMNASIDLN…DKKTAFNSSE (134 aa).

Belongs to the DnaA family. Oligomerizes as a right-handed, spiral filament on DNA at oriC.

It localises to the cytoplasm. In terms of biological role, plays an essential role in the initiation and regulation of chromosomal replication. ATP-DnaA binds to the origin of replication (oriC) to initiate formation of the DNA replication initiation complex once per cell cycle. Binds the DnaA box (a 9 base pair repeat at the origin) and separates the double-stranded (ds)DNA. Forms a right-handed helical filament on oriC DNA; dsDNA binds to the exterior of the filament while single-stranded (ss)DNA is stabiized in the filament's interior. The ATP-DnaA-oriC complex binds and stabilizes one strand of the AT-rich DNA unwinding element (DUE), permitting loading of DNA polymerase. After initiation quickly degrades to an ADP-DnaA complex that is not apt for DNA replication. Binds acidic phospholipids. This is Chromosomal replication initiator protein DnaA from Helicobacter pylori (strain HPAG1).